Reading from the N-terminus, the 423-residue chain is Diels-Alderase pyiF (423 aa).

Residues 1–17 (MLPSFIFVYSLLATATA) form the signal peptide. N-linked (GlcNAc...) asparagine glycosylation is found at asparagine 60, asparagine 92, and asparagine 219.

Belongs to the Diels-Alderase family.

It participates in mycotoxin biosynthesis. Diels-Alderase; part of the gene cluster that mediates the biosynthesis of the mycotoxin pyrichalasin H, a tyrosine-derived cytochalasan that inhibits the growth of rice seedlings, but also inhibits lymphocyte capping and actin polymerization and alters cell morphology. Pyrichalasin H is indicated as the responsible agent for the genus-specific pathogenicity of M.grisea toward crabgrass. The first step in the pathway is catalyzed by the O-methyltransferase pyiA which methylates free tyrosine to generate the precursor O-methyltyrosine. The hybrid PKS-NRPS pyiS, assisted by the enoyl reductase pyiC, are responsible for fusion of the O-methyltyrosine precursor and the polyketide backbone. The polyketide synthase module (PKS) of pyiS is responsible for the synthesis of the polyketide backbone and the downstream nonribosomal peptide synthetase (NRPS) amidates the carboxyl end of the polyketide with the O-methyltyrosine precursor. As the NRPS A-domain demonstrates substrate tolerance, pyiS can also use phenylalanine, tyrosine and even para-chlorophenylalanine as amino acid precursor, which leads to the production of novel cytochalasans, including halogenated cytochalasans. Because pyiS lacks a designated enoylreductase (ER) domain, the required activity is provided the enoyl reductase pyiC. Reduction by the hydrolyase pyiE leads to 1,5-dihydropyrrolone, which is substrate for dehydration and intra-molecular Diels-Alder cyclization by the Diels-Alderase pyiF to yield the required isoindolone-fused macrocycle. The tailoring cytochrome P450 monooxygenases piyD and piyG catalyze the hydroxylation at C-18 and C-7, respectivily, whereas the short-chain dehydrogenase/reductase pyiH reduces the carbonyl at C-21 in preparation for the transfer of an acetyl group by the acetyltransferase pyiB. These 3 reactions whose order is not clear yet, lead to the production of O-methylpyrichalasin J, a deacetylated pyrichalasin H. Finally, pyiB to converts O-methylpyrichalasin J into the final product pyrichalasin H via acetylation of C-21. In Pyricularia grisea (Crabgrass-specific blast fungus), this protein is Diels-Alderase pyiF.